The following is a 255-amino-acid chain: Large ribosomal subunit protein uL4 (255 aa).

It belongs to the universal ribosomal protein uL4 family. As to quaternary structure, part of the 50S ribosomal subunit.

In terms of biological role, one of the primary rRNA binding proteins, this protein initially binds near the 5'-end of the 23S rRNA. It is important during the early stages of 50S assembly. It makes multiple contacts with different domains of the 23S rRNA in the assembled 50S subunit and ribosome. Forms part of the polypeptide exit tunnel. The chain is Large ribosomal subunit protein uL4 from Thermoplasma acidophilum (strain ATCC 25905 / DSM 1728 / JCM 9062 / NBRC 15155 / AMRC-C165).